The primary structure comprises 302 residues: MDQIRLTHLRQLEAESIHIIREVAAEFSNPVMLYSIGKDSSVMLHLARKAFYPGTLPFPLLHVDTGWKFREMYEFRDRTAKAYGCELLVHQNPEGVAMGINPFVHGSAKHTDIMKTEGLKQALNKYGFDAAFGGARRDEEKSRAKERIYSFRDRFHRWDPKNQRPELWHNYNGQINKGESIRVFPLSNWTEQDIWQYIWLENIDIVPLYLAAERPVLERDGMLMMIDDNRIDLQPGEVIKKRMVRFRTLGCWPLTGAVESNAQTLPEIIEEMLVSTTSERQGRVIDRDQAGSMELKKRQGYF.

The protein belongs to the PAPS reductase family. CysD subfamily. As to quaternary structure, heterodimer composed of CysD, the smaller subunit, and CysN.

The enzyme catalyses sulfate + ATP + H(+) = adenosine 5'-phosphosulfate + diphosphate. It functions in the pathway sulfur metabolism; hydrogen sulfide biosynthesis; sulfite from sulfate: step 1/3. Its function is as follows. With CysN forms the ATP sulfurylase (ATPS) that catalyzes the adenylation of sulfate producing adenosine 5'-phosphosulfate (APS) and diphosphate, the first enzymatic step in sulfur assimilation pathway. APS synthesis involves the formation of a high-energy phosphoric-sulfuric acid anhydride bond driven by GTP hydrolysis by CysN coupled to ATP hydrolysis by CysD. This chain is Sulfate adenylyltransferase subunit 2, found in Escherichia coli O157:H7 (strain EC4115 / EHEC).